The following is a 344-amino-acid chain: Galactinol synthase 1 (344 aa).

The active site involves Lys-111. Positions 127, 129, and 265 each coordinate Mn(2+).

This sequence belongs to the glycosyltransferase 8 family. Galactosyltransferase subfamily. A divalent metal cation serves as cofactor. In terms of tissue distribution, accumulates in mature seeds. Expressed in seedlings (axes and cotyledons), meristems, vascular tissues and emerging lateral roots. Present in abscission zones.

The protein resides in the cytoplasm. The enzyme catalyses myo-inositol + UDP-alpha-D-galactose = alpha-D-galactosyl-(1-&gt;3)-1D-myo-inositol + UDP + H(+). In terms of biological role, galactinol synthase involved in the biosynthesis of raffinose family oligosaccharides (RFOs) that function as osmoprotectants. Promotes plant stress tolerance such as heat, chilling, salinity and methylviologen (MV), a superoxide radical generating drug, by mediating raffinose accumulation, an osmoprotective substance. The protein is Galactinol synthase 1 (GOLS1) of Arabidopsis thaliana (Mouse-ear cress).